The primary structure comprises 667 residues: Serine/threonine-protein kinase BUR1 (667 aa).

The 319-residue stretch at Y60–F378 folds into the Protein kinase domain. ATP-binding positions include L66–V74 and K89. Catalysis depends on D207, which acts as the Proton acceptor. The segment at H408 to Y667 is disordered. The segment covering K432–Q443 has biased composition (basic and acidic residues). Polar residues predominate over residues N494–R516. A compositionally biased stretch (low complexity) spans Y541 to R556. Polar residues-rich tracts occupy residues D582–S594, S602–I611, and N622–Q632. Basic and acidic residues predominate over residues D633–Y667.

The protein belongs to the protein kinase superfamily. CMGC Ser/Thr protein kinase family. CDC2/CDKX subfamily.

The protein resides in the nucleus. It catalyses the reaction L-seryl-[protein] + ATP = O-phospho-L-seryl-[protein] + ADP + H(+). It carries out the reaction L-threonyl-[protein] + ATP = O-phospho-L-threonyl-[protein] + ADP + H(+). The enzyme catalyses [DNA-directed RNA polymerase] + ATP = phospho-[DNA-directed RNA polymerase] + ADP + H(+). In terms of biological role, serine/threonine-protein kinase involved in transcription regulation. Phosphorylates the UBC2/RAD6 ubiquitin-conjugating enzyme (E2), leading to monoubiquitination of histone H2B and the silencing of telomeric-associated genes. Also required for histone H3 methylation. Necessary for the recovery from pheromone-induced growth arrest in the cell cycle G1 phase. The polypeptide is Serine/threonine-protein kinase BUR1 (BUR1) (Candida glabrata (strain ATCC 2001 / BCRC 20586 / JCM 3761 / NBRC 0622 / NRRL Y-65 / CBS 138) (Yeast)).